Consider the following 254-residue polypeptide: 3-deoxy-manno-octulosonate cytidylyltransferase (254 aa).

The protein belongs to the KdsB family.

It localises to the cytoplasm. It carries out the reaction 3-deoxy-alpha-D-manno-oct-2-ulosonate + CTP = CMP-3-deoxy-beta-D-manno-octulosonate + diphosphate. The protein operates within nucleotide-sugar biosynthesis; CMP-3-deoxy-D-manno-octulosonate biosynthesis; CMP-3-deoxy-D-manno-octulosonate from 3-deoxy-D-manno-octulosonate and CTP: step 1/1. Its pathway is bacterial outer membrane biogenesis; lipopolysaccharide biosynthesis. Activates KDO (a required 8-carbon sugar) for incorporation into bacterial lipopolysaccharide in Gram-negative bacteria. This chain is 3-deoxy-manno-octulosonate cytidylyltransferase, found in Bordetella parapertussis (strain 12822 / ATCC BAA-587 / NCTC 13253).